The following is a 177-amino-acid chain: Glutamyl-tRNA(Gln) amidotransferase subunit F, mitochondrial (177 aa).

A mitochondrion-targeting transit peptide spans 1 to 16 (MIRINSRGLTVSTRRF). Residues 148–177 (PAKGETQGSFNVANMNPRNRPFATIRSKQG) form a disordered region. Polar residues predominate over residues 153 to 164 (TQGSFNVANMNP).

Belongs to the GatF family. In terms of assembly, subunit of the heterotrimeric GatFAB amidotransferase (AdT) complex, composed of A, B and F subunits.

The protein localises to the mitochondrion inner membrane. The catalysed reaction is L-glutamyl-tRNA(Gln) + L-glutamine + ATP + H2O = L-glutaminyl-tRNA(Gln) + L-glutamate + ADP + phosphate + H(+). In terms of biological role, allows the formation of correctly charged Gln-tRNA(Gln) through the transamidation of misacylated Glu-tRNA(Gln) in the mitochondria. The reaction takes place in the presence of glutamine and ATP through an activated gamma-phospho-Glu-tRNA(Gln). Required for proper protein synthesis within the mitochondrion. This Scheffersomyces stipitis (strain ATCC 58785 / CBS 6054 / NBRC 10063 / NRRL Y-11545) (Yeast) protein is Glutamyl-tRNA(Gln) amidotransferase subunit F, mitochondrial.